A 300-amino-acid polypeptide reads, in one-letter code: Tyrosine recombinase XerC (300 aa).

A Core-binding (CB) domain is found at 2–88 (TQEGQLEKRF…SLRSFYTFLL (87 aa)). A Tyr recombinase domain is found at 109–294 (RLPKFFYSEE…TKEHLKSTYM (186 aa)). Active-site residues include Arg150, Lys174, His246, Arg249, and His272. Tyr281 functions as the O-(3'-phospho-DNA)-tyrosine intermediate in the catalytic mechanism.

This sequence belongs to the 'phage' integrase family. XerC subfamily. Forms a cyclic heterotetrameric complex composed of two molecules of XerC and two molecules of XerD.

The protein resides in the cytoplasm. Its function is as follows. Site-specific tyrosine recombinase, which acts by catalyzing the cutting and rejoining of the recombining DNA molecules. The XerC-XerD complex is essential to convert dimers of the bacterial chromosome into monomers to permit their segregation at cell division. It also contributes to the segregational stability of plasmids. In Listeria innocua serovar 6a (strain ATCC BAA-680 / CLIP 11262), this protein is Tyrosine recombinase XerC.